The chain runs to 156 residues: Ribosomal RNA large subunit methyltransferase H (156 aa).

Residues Leu73, Gly104, and 123–128 (ISSMTL) each bind S-adenosyl-L-methionine.

Belongs to the RNA methyltransferase RlmH family. As to quaternary structure, homodimer.

It localises to the cytoplasm. The catalysed reaction is pseudouridine(1915) in 23S rRNA + S-adenosyl-L-methionine = N(3)-methylpseudouridine(1915) in 23S rRNA + S-adenosyl-L-homocysteine + H(+). In terms of biological role, specifically methylates the pseudouridine at position 1915 (m3Psi1915) in 23S rRNA. This chain is Ribosomal RNA large subunit methyltransferase H, found in Burkholderia vietnamiensis (strain G4 / LMG 22486) (Burkholderia cepacia (strain R1808)).